The following is a 550-amino-acid chain: Hydroxylamine reductase (550 aa).

[2Fe-2S] cluster is bound by residues Cys3, Cys6, Cys18, and Cys25. Hybrid [4Fe-2O-2S] cluster-binding residues include His249, Glu273, Cys317, Cys405, Cys433, Cys458, Glu492, and Lys494. Cys405 is modified (cysteine persulfide).

It belongs to the HCP family. [2Fe-2S] cluster serves as cofactor. Requires hybrid [4Fe-2O-2S] cluster as cofactor.

It is found in the cytoplasm. It carries out the reaction A + NH4(+) + H2O = hydroxylamine + AH2 + H(+). In terms of biological role, catalyzes the reduction of hydroxylamine to form NH(3) and H(2)O. This Escherichia coli O139:H28 (strain E24377A / ETEC) protein is Hydroxylamine reductase.